Consider the following 141-residue polypeptide: General odorant-binding protein 57b (141 aa).

Residues 1-22 (MFIYRLVFIAPLILLLFSLAKA) form the signal peptide. Cystine bridges form between Cys39–Cys77, Cys73–Cys120, and Cys111–Cys129.

The protein belongs to the PBP/GOBP family.

Its function is as follows. Present in the aqueous fluid surrounding olfactory sensory dendrites and are thought to aid in the capture and transport of hydrophobic odorants into and through this fluid. This chain is General odorant-binding protein 57b, found in Drosophila melanogaster (Fruit fly).